The chain runs to 822 residues: Fibroblast growth factor receptor 1 (822 aa).

The first 21 residues, 1 to 21, serve as a signal peptide directing secretion; that stretch reads MWGWRGLLFWAVLVTATLCTA. Residues 22–376 are Extracellular-facing; it reads RPAPTLPEQA…AVMTSPLYLE (355 aa). The Ig-like C2-type 1 domain maps to 25–119; the sequence is PTLPEQAQPW…DTTYFSVNVS (95 aa). Residues Cys-55 and Cys-101 are joined by a disulfide bond. 2 N-linked (GlcNAc...) asparagine glycosylation sites follow: Asn-77 and Asn-117. The interval 120-162 is disordered; sequence DALPSSEDDDDDDDSSSEEKETDNTKPNRRPVAPYWTSPEKME. Positions 125–135 are enriched in acidic residues; the sequence is SEDDDDDDDSS. A compositionally biased stretch (basic and acidic residues) spans 136–145; that stretch reads SEEKETDNTK. Ig-like C2-type domains are found at residues 158–246 and 255–357; these read PEKM…YQLD and PILQ…AWLT. The tract at residues 160–177 is heparin-binding; it reads KMEKKLHAVPAAKTVKFK. Cysteines 178 and 230 form a disulfide. N-linked (GlcNAc...) asparagine glycosylation is found at Asn-227, Asn-240, Asn-264, Asn-296, Asn-317, and Asn-330. A disulfide bridge connects residues Cys-277 and Cys-341. The chain crosses the membrane as a helical span at residues 377–397; the sequence is IIIYCTGAFLISCMVGSVIIY. At 398-822 the chain is on the cytoplasmic side; that stretch reads KMKSGTKKSD…QLANGGLNRR (425 aa). A Phosphotyrosine; by autocatalysis modification is found at Tyr-463. In terms of domain architecture, Protein kinase spans 478–767; it reads LVLGKPLGEG…VALTSNQEYL (290 aa). Residues 484–490, Lys-514, 562–564, and Asn-568 each bind ATP; these read LGEGCFG and EYA. 2 positions are modified to phosphotyrosine; by autocatalysis: Tyr-583 and Tyr-585. Asp-623 (proton acceptor) is an active-site residue. ATP is bound by residues Arg-627 and Asp-641. Phosphotyrosine; by autocatalysis is present on residues Tyr-653, Tyr-654, Tyr-730, and Tyr-766. Residues 770–822 form a disordered region; that stretch reads SMPLDQDSPSFPDTRSSTCSSGEDSVFSHEPFPEEPCLPRHPTQLANGGLNRR. Residues 776-792 are compositionally biased toward polar residues; it reads DSPSFPDTRSSTCSSGE.

It belongs to the protein kinase superfamily. Tyr protein kinase family. Fibroblast growth factor receptor subfamily. Monomer. Homodimer after ligand binding. Interacts predominantly with FGF1 and FGF2, but can also interact with FGF3, FGF4, FGF5, FGF6, FGF8, FGF10, FGF19, FGF21, FGF22 and FGF23 (in vitro). Ligand specificity is determined by tissue-specific expression of isoforms, and differences in the third Ig-like domain are crucial for ligand specificity. Affinity for fibroblast growth factors (FGFs) is increased by heparan sulfate glycosaminoglycans that function as coreceptors. Likewise, KLB increases the affinity for FGF19, FGF21 and FGF23. Interacts (phosphorylated on Tyr-766) with PLCG1 (via SH2 domains). Interacts with FRS2. Interacts (via C-terminus) with NEDD4 (via WW3 domain). Interacts with RPS6KA1. Interacts with KL. Interacts with SHB (via SH2 domain) and GRB10. Interacts with ANOS1; this interaction does not interfere with FGF2-binding to FGFR1, but prevents binding of heparin-bound FGF2. Interacts with SOX2 and SOX3. Interacts with FLRT1, FLRT2 and FLRT3. Found in a ternary complex with FGF1 and ITGAV:ITGB3. In terms of processing, autophosphorylated. Binding of FGF family members together with heparan sulfate proteoglycan or heparin promotes receptor dimerization and autophosphorylation on tyrosine residues. Autophosphorylation occurs in trans between the two FGFR molecules present in the dimer and proceeds in a highly ordered manner. Initial autophosphorylation at Tyr-653 increases the kinase activity by a factor of 50 to 100. After this, Tyr-583 becomes phosphorylated, followed by phosphorylation of Tyr-463, Tyr-766, Tyr-583 and Tyr-585. In a third stage, Tyr-654 is autophosphorylated, resulting in a further tenfold increase of kinase activity. Phosphotyrosine residues provide docking sites for interacting proteins and so are crucial for FGFR1 function and its regulation. Ubiquitinated. FGFR1 is rapidly ubiquitinated by NEDD4 after autophosphorylation, leading to internalization and lysosomal degradation. CBL is recruited to activated FGFR1 via FRS2 and GRB2, and mediates ubiquitination and subsequent degradation of FGFR1. Post-translationally, N-glycosylated in the endoplasmic reticulum. The N-glycan chains undergo further maturation to an Endo H-resistant form in the Golgi apparatus. In terms of tissue distribution, expressed in the parathyroid.

It is found in the cell membrane. The protein resides in the nucleus. It localises to the cytoplasm. Its subcellular location is the cytosol. The protein localises to the cytoplasmic vesicle. It carries out the reaction L-tyrosyl-[protein] + ATP = O-phospho-L-tyrosyl-[protein] + ADP + H(+). Present in an inactive conformation in the absence of bound ligand. Ligand binding leads to dimerization and activation by sequential autophosphorylation on tyrosine residues. In terms of biological role, tyrosine-protein kinase that acts as a cell-surface receptor for fibroblast growth factors and plays an essential role in the regulation of embryonic development, cell proliferation, differentiation and migration. Required for normal mesoderm patterning and correct axial organization during embryonic development, normal skeletogenesis and normal development of the gonadotropin-releasing hormone (GnRH) neuronal system. Phosphorylates PLCG1, FRS2, GAB1 and SHB. Ligand binding leads to the activation of several signaling cascades. Activation of PLCG1 leads to the production of the cellular signaling molecules diacylglycerol and inositol 1,4,5-trisphosphate. Phosphorylation of FRS2 triggers recruitment of GRB2, GAB1, PIK3R1 and SOS1, and mediates activation of RAS, MAPK1/ERK2, MAPK3/ERK1 and the MAP kinase signaling pathway, as well as of the AKT1 signaling pathway. Promotes phosphorylation of SHC1, STAT1 and PTPN11/SHP2. In the nucleus, enhances RPS6KA1 and CREB1 activity and contributes to the regulation of transcription. FGFR1 signaling is down-regulated by IL17RD/SEF, and by FGFR1 ubiquitination, internalization and degradation. The polypeptide is Fibroblast growth factor receptor 1 (Fgfr1) (Rattus norvegicus (Rat)).